Consider the following 368-residue polypeptide: Agmatine deiminase (368 aa).

Catalysis depends on Cys357, which acts as the Amidino-cysteine intermediate.

The protein belongs to the agmatine deiminase family. Homodimer.

The catalysed reaction is agmatine + H2O = N-carbamoylputrescine + NH4(+). It participates in amine and polyamine biosynthesis; putrescine biosynthesis via agmatine pathway; N-carbamoylputrescine from agmatine: step 1/1. Its function is as follows. Mediates the hydrolysis of agmatine into N-carbamoylputrescine in the arginine decarboxylase (ADC) pathway of putrescine biosynthesis, a basic polyamine. This chain is Agmatine deiminase, found in Pseudomonas syringae pv. tomato (strain ATCC BAA-871 / DC3000).